We begin with the raw amino-acid sequence, 1131 residues long: Activity-dependent neuroprotector homeobox protein 2 (1131 aa).

The C2H2-type 1 zinc finger occupies 73–96 (YCCGLCKYSTKVLTSFKNHLHRYH). The segment at 106 to 128 (IPCPNCVFASQPKVVGRHFRMFH) adopts a C2H2-type 2; degenerate zinc-finger fold. Glycyl lysine isopeptide (Lys-Gly) (interchain with G-Cter in SUMO2) cross-links involve residues K118 and K146. The segment at 155-178 (FTCLKCNFSNTLYYSMKKHVLVAH) adopts a C2H2-type 3; degenerate zinc-finger fold. The segment at 215–240 (YYCKKCNANASSQDALMYHILTSDIH) adopts a C2H2-type 4 zinc-finger fold. Residues 274–285 (LAAPANGSAPSA) are compositionally biased toward low complexity. The interval 274-329 (LAAPANGSAPSAPAQPPCFHLALPQNSPSPAAGQPVTVAQGAPGSLTHSPPAAGQS) is disordered. Residues 694–716 (KTCPVCNELFPSNVYQVHMEVAH) form a C2H2-type 5; degenerate zinc finger. The segment at 747–768 (VRCLSCKCLVSEEELIHHLLMH) adopts a C2H2-type 6; degenerate zinc-finger fold. 2 consecutive C2H2-type zinc fingers follow at residues 770–793 (LGCLFCPCTFHDIKGLSEHSRNRH) and 875–898 (STCPFCFGPFVTTEAYELHLKERH). The C2H2-type 9; degenerate zinc-finger motif lies at 913–937 (FKCIHCCGVYTGNMTLAAIAVHLVR). Residues K979 and K1018 each participate in a glycyl lysine isopeptide (Lys-Gly) (interchain with G-Cter in SUMO2) cross-link. Residue S1024 is modified to Phosphoserine. A Glycyl lysine isopeptide (Lys-Gly) (interchain with G-Cter in SUMO1); alternate cross-link involves residue K1032. K1032 participates in a covalent cross-link: Glycyl lysine isopeptide (Lys-Gly) (interchain with G-Cter in SUMO2); alternate. A DNA-binding region (homeobox) is located at residues 1043-1102 (PKKYEGRSYEEKKQFLKDYFHKKPYPSKKEIELLSSLFWVWKIDVASFFGKRRYICMKAI).

It belongs to the krueppel C2H2-type zinc-finger protein family. As to quaternary structure, may interact with SMARCA4/BRG1.

The protein resides in the nucleus. In terms of biological role, may be involved in transcriptional regulation. May play a role in neuronal function; perhaps involved in protection of brain tissues from oxidative stress. May be involved in erythroid differentiation. The polypeptide is Activity-dependent neuroprotector homeobox protein 2 (ADNP2) (Homo sapiens (Human)).